Consider the following 198-residue polypeptide: Nucleoid occlusion factor SlmA (198 aa).

An HTH tetR-type domain is found at N10–L70. A DNA-binding region (H-T-H motif) is located at residues T33 to F52. Positions E117–M145 form a coiled coil.

The protein belongs to the nucleoid occlusion factor SlmA family. As to quaternary structure, homodimer. Interacts with FtsZ.

The protein resides in the cytoplasm. It is found in the nucleoid. Its function is as follows. Required for nucleoid occlusion (NO) phenomenon, which prevents Z-ring formation and cell division over the nucleoid. Acts as a DNA-associated cell division inhibitor that binds simultaneously chromosomal DNA and FtsZ, and disrupts the assembly of FtsZ polymers. SlmA-DNA-binding sequences (SBS) are dispersed on non-Ter regions of the chromosome, preventing FtsZ polymerization at these regions. In Klebsiella pneumoniae subsp. pneumoniae (strain ATCC 700721 / MGH 78578), this protein is Nucleoid occlusion factor SlmA.